Consider the following 624-residue polypeptide: Glutamine--fructose-6-phosphate aminotransferase [isomerizing] (624 aa).

C2 functions as the Nucleophile; for GATase activity in the catalytic mechanism. The Glutamine amidotransferase type-2 domain maps to 2–226 (CGIVGYVGQQ…QDQAVVLTAD (225 aa)). 2 consecutive SIS domains span residues 297–436 (SDQE…ARGT) and 469–614 (LAQR…VDKP). The active-site For Fru-6P isomerization activity is the K619.

As to quaternary structure, homodimer.

It is found in the cytoplasm. It catalyses the reaction D-fructose 6-phosphate + L-glutamine = D-glucosamine 6-phosphate + L-glutamate. Catalyzes the first step in hexosamine metabolism, converting fructose-6P into glucosamine-6P using glutamine as a nitrogen source. The chain is Glutamine--fructose-6-phosphate aminotransferase [isomerizing] from Mycolicibacterium paratuberculosis (strain ATCC BAA-968 / K-10) (Mycobacterium paratuberculosis).